Reading from the N-terminus, the 29-residue chain is Cyclotide mela-7 (29 aa).

The cyclopeptide (Gly-Asn) cross-link spans 1–29 (GLPTCGETCFKGKCYTPGCSCSYPICKKN). 3 cysteine pairs are disulfide-bonded: Cys-5–Cys-19, Cys-9–Cys-21, and Cys-14–Cys-26.

This is a cyclic peptide. Post-translationally, contains 3 disulfide bonds.

Its function is as follows. Probably participates in a plant defense mechanism (Potential). Binds to and induces leakage in phospholipd membranes, particularly ones containing 1-palmitoyl-2-oleophosphatidylethanolamine (POPE). In vitro, displays cytotoxicity against cultured cells but no hemolytic activity towards fresh erythrocytes. Not active against Gram-negative bacterium E.coli ATCC 25922 or Gram-positive bacterium S.aureus ATCC 25923 up to a concentration of 64 uM. The sequence is that of Cyclotide mela-7 from Melicytus latifolius (Norfolk Island mahoe).